A 556-amino-acid polypeptide reads, in one-letter code: Protein trichome birefringence-like 1 (556 aa).

A helical; Signal-anchor for type II membrane protein membrane pass occupies residues 38–58 (TFVYAFVVTFVALTVFLAFSP). The GDS motif motif lies at 269-271 (GDS). The short motif at 514–528 (DCSHWCLPGVPDSWN) is the DCXHWCLPGXXDXWN motif element.

It belongs to the PC-esterase family. TBL subfamily. As to expression, not expressed in trichomes.

The protein localises to the membrane. Its function is as follows. Can complement TBR and is therefore functionally equivalent, but may work in different tissue. May act as a bridging protein that binds pectin and other cell wall polysaccharides. Probably involved in maintaining esterification of pectins. May be involved in the specific O-acetylation of cell wall polymers. In Arabidopsis thaliana (Mouse-ear cress), this protein is Protein trichome birefringence-like 1 (TBL1).